The primary structure comprises 158 residues: Protein OPG060 (158 aa).

Belongs to the orthopoxvirus OPG058 family.

This chain is Protein OPG060 (OPG060), found in Homo sapiens (Human).